A 120-amino-acid chain; its full sequence is Large ribosomal subunit protein bL12 (120 aa).

Positions 95 to 112 are enriched in basic and acidic residues; sequence KEGVSKEEAEEVQGKLEE. Positions 95–120 are disordered; the sequence is KEGVSKEEAEEVQGKLEEAGASVEVK.

The protein belongs to the bacterial ribosomal protein bL12 family. As to quaternary structure, homodimer. Part of the ribosomal stalk of the 50S ribosomal subunit. Forms a multimeric L10(L12)X complex, where L10 forms an elongated spine to which 2 to 4 L12 dimers bind in a sequential fashion. Binds GTP-bound translation factors.

In terms of biological role, forms part of the ribosomal stalk which helps the ribosome interact with GTP-bound translation factors. Is thus essential for accurate translation. The protein is Large ribosomal subunit protein bL12 of Oceanobacillus iheyensis (strain DSM 14371 / CIP 107618 / JCM 11309 / KCTC 3954 / HTE831).